A 270-amino-acid chain; its full sequence is NAD(P)H-hydrate epimerase (270 aa).

Residues 25–234 (FQQLMDLMQN…DLLAPEAIYQ (210 aa)) form the YjeF N-terminal domain. 73 to 77 (DNGGQ) lines the (6S)-NADPHX pocket. Residues Asn74 and Asp144 each coordinate K(+). (6S)-NADPHX is bound by residues 148 to 154 (GVGLYGH) and Glu177. Thr180 provides a ligand contact to K(+).

Belongs to the NnrE/AIBP family. K(+) serves as cofactor.

It catalyses the reaction (6R)-NADHX = (6S)-NADHX. The catalysed reaction is (6R)-NADPHX = (6S)-NADPHX. Functionally, catalyzes the epimerization of the S- and R-forms of NAD(P)HX, a damaged form of NAD(P)H that is a result of enzymatic or heat-dependent hydration. This is a prerequisite for the S-specific NAD(P)H-hydrate dehydratase to allow the repair of both epimers of NAD(P)HX. The sequence is that of NAD(P)H-hydrate epimerase from Legionella pneumophila (strain Corby).